Here is a 580-residue protein sequence, read N- to C-terminus: MAKMRPSVSLDTWREYFRRGDSDIFGIIDHAIMVAAADWPKEFKSRSDRIAELLFSCKVSRCIGCDHLELSIAGDEAAVEIVGVGGGGDRGDSGVATGEGEEASVSVDEVMRIRDILSNKDDEKDSVLLESLRKLESMSMSVDILKDTEIGKAVNGLRRHSSDKISKLAKTLFAEWKRLVDQWMNTPEEMAGTEGTPESLNLSVIDEEEAFPSPPHDLDIYAPEPNGFELSQILDCLDCDGNPRHSVESKHERKSQSSAGRRPKGTNDANVVGRYCNDQQTRREEADVRPMKHSATDVVEPKRQTKQSREQMVSAIQRKPTAVTEQKRKLAGPQQDKLKALDPDSKFEFAKRKLQESYHQHENAKRQRTIQVLETIPKQNKVQKPQLKRPATRRYIYWYFWSSEFPGYELPSLILNLANPRDSSSQFSRHDELMIDIPVYFGLVLVQIDKAEMVDEMMIFKKMSVLLTEKDFVDAIVSVSLKDLTRSLFVRFEAKACPKFDLIHKTSVETVRCVGKTFMHMLSKVSREFPPRNRTHPGGLLYQRFDPTHLSLARQQVAICKETDSQYPHEIVIHWTSASA.

One can recognise a TFIIS N-terminal domain in the interval 108–183 (DEVMRIRDIL…AEWKRLVDQW (76 aa)). 3 stretches are compositionally biased toward basic and acidic residues: residues 244–255 (RHSVESKHERKS), 280–290 (QTRREEADVRP), and 299–309 (VEPKRQTKQSR). Residues 244-337 (RHSVESKHER…RKLAGPQQDK (94 aa)) are disordered. Residues 347-368 (FEFAKRKLQESYHQHENAKRQR) are a coiled coil.

The protein belongs to the Mediator complex subunit 26 family. In terms of assembly, component of the Mediator complex.

The protein localises to the nucleus. Its function is as follows. Component of the Mediator complex, a coactivator involved in the regulated transcription of nearly all RNA polymerase II-dependent genes. Mediator functions as a bridge to convey information from gene-specific regulatory proteins to the basal RNA polymerase II transcription machinery. The Mediator complex, having a compact conformation in its free form, is recruited to promoters by direct interactions with regulatory proteins and serves for the assembly of a functional preinitiation complex with RNA polymerase II and the general transcription factors. May play a role in transcription elongation. The polypeptide is Probable mediator of RNA polymerase II transcription subunit 26a (MED26A) (Arabidopsis thaliana (Mouse-ear cress)).